A 333-amino-acid chain; its full sequence is Ketol-acid reductoisomerase (NAD(P)(+)) (333 aa).

The 181-residue stretch at 2–182 (AKIYYDEDAS…GATRAGVIET (181 aa)) folds into the KARI N-terminal Rossmann domain. NADP(+)-binding positions include 25–28 (YGSQ), Ser51, and 83–86 (DTVQ). Residue His108 is part of the active site. Gly134 contributes to the NADP(+) binding site. The KARI C-terminal knotted domain occupies 183 to 327 (TFREETETDL…KELRQMMPWL (145 aa)). Residues Asp191, Glu195, Glu227, and Glu231 each coordinate Mg(2+). Ser252 contacts substrate.

This sequence belongs to the ketol-acid reductoisomerase family. Mg(2+) serves as cofactor.

It carries out the reaction (2R)-2,3-dihydroxy-3-methylbutanoate + NAD(+) = (2S)-2-acetolactate + NADH + H(+). It catalyses the reaction (2R)-2,3-dihydroxy-3-methylbutanoate + NADP(+) = (2S)-2-acetolactate + NADPH + H(+). Its pathway is amino-acid biosynthesis; L-isoleucine biosynthesis; L-isoleucine from 2-oxobutanoate: step 2/4. It functions in the pathway amino-acid biosynthesis; L-valine biosynthesis; L-valine from pyruvate: step 2/4. In terms of biological role, involved in the biosynthesis of branched-chain amino acids (BCAA). Catalyzes an alkyl-migration followed by a ketol-acid reduction of (S)-2-acetolactate (S2AL) to yield (R)-2,3-dihydroxy-isovalerate. In the isomerase reaction, S2AL is rearranged via a Mg-dependent methyl migration to produce 3-hydroxy-3-methyl-2-ketobutyrate (HMKB). In the reductase reaction, this 2-ketoacid undergoes a metal-dependent reduction by NADPH or NADH to yield (R)-2,3-dihydroxy-isovalerate. The polypeptide is Ketol-acid reductoisomerase (NAD(P)(+)) (Hydrogenobaculum sp. (strain Y04AAS1)).